The primary structure comprises 98 residues: Lipolysis-activating peptide 1-alpha chain (98 aa).

The signal sequence occupies residues 1-22 (MMKFVLFGMIVILFSLMGSIRG). Positions 26 to 89 (PGNYPTNAYG…IWNAVKNHCT (64 aa)) constitute an LCN-type CS-alpha/beta domain. 3 disulfides stabilise this stretch: cysteine 40–cysteine 63, cysteine 49–cysteine 68, and cysteine 53–cysteine 70. The residue at position 96 (asparagine 96) is an Asparagine amide.

This sequence belongs to the long (3 C-C) scorpion toxin superfamily. As to quaternary structure, monomer (edited version) and heterodimer (non-edited version) of this alpha chain and a beta chain (AC Q95P90). Expressed by the venom gland.

It is found in the secreted. Its function is as follows. The heterodimer non-edited LVP1 induces lipolysis in rat adipocytes. Induction of lipolysis by LVP1 appears to be mediated through the beta-2 adrenergic receptor pathway (ADRB2). The edited BmKBTx, similar to beta-toxins, may modulate voltage-gated sodium channels (Nav) and may block voltage-gated potassium channels (Kv). Seems to be a rare component in the venom. The polypeptide is Lipolysis-activating peptide 1-alpha chain (LVP1a) (Olivierus martensii (Manchurian scorpion)).